A 339-amino-acid chain; its full sequence is Glycerol-3-phosphate dehydrogenase [NAD(P)+] (339 aa).

Residues serine 31, tryptophan 32, arginine 52, and lysine 122 each contribute to the NADPH site. The sn-glycerol 3-phosphate site is built by lysine 122 and glycine 152. NADPH is bound at residue alanine 156. Lysine 207, aspartate 260, serine 270, arginine 271, and asparagine 272 together coordinate sn-glycerol 3-phosphate. Lysine 207 functions as the Proton acceptor in the catalytic mechanism. Arginine 271 is an NADPH binding site. Residue glutamate 293 participates in NADPH binding.

It belongs to the NAD-dependent glycerol-3-phosphate dehydrogenase family.

Its subcellular location is the cytoplasm. The enzyme catalyses sn-glycerol 3-phosphate + NAD(+) = dihydroxyacetone phosphate + NADH + H(+). It carries out the reaction sn-glycerol 3-phosphate + NADP(+) = dihydroxyacetone phosphate + NADPH + H(+). It participates in membrane lipid metabolism; glycerophospholipid metabolism. Its function is as follows. Catalyzes the reduction of the glycolytic intermediate dihydroxyacetone phosphate (DHAP) to sn-glycerol 3-phosphate (G3P), the key precursor for phospholipid synthesis. This chain is Glycerol-3-phosphate dehydrogenase [NAD(P)+], found in Tropheryma whipplei (strain Twist) (Whipple's bacillus).